The sequence spans 586 residues: Arginine--tRNA ligase (586 aa).

The 'HIGH' region signature appears at Ala-131–His-141.

Belongs to the class-I aminoacyl-tRNA synthetase family. In terms of assembly, monomer.

The protein resides in the cytoplasm. It catalyses the reaction tRNA(Arg) + L-arginine + ATP = L-arginyl-tRNA(Arg) + AMP + diphosphate. This is Arginine--tRNA ligase from Nitrosomonas eutropha (strain DSM 101675 / C91 / Nm57).